We begin with the raw amino-acid sequence, 42 residues long: Photosystem II reaction center protein J (42 aa).

Residues Ile-10–Phe-30 traverse the membrane as a helical segment.

The protein belongs to the PsbJ family. PSII is composed of 1 copy each of membrane proteins PsbA, PsbB, PsbC, PsbD, PsbE, PsbF, PsbH, PsbI, PsbJ, PsbK, PsbL, PsbM, PsbT, PsbX, PsbY, PsbZ, Psb30/Ycf12, at least 3 peripheral proteins of the oxygen-evolving complex and a large number of cofactors. It forms dimeric complexes.

Its subcellular location is the plastid. It is found in the chloroplast thylakoid membrane. Its function is as follows. One of the components of the core complex of photosystem II (PSII). PSII is a light-driven water:plastoquinone oxidoreductase that uses light energy to abstract electrons from H(2)O, generating O(2) and a proton gradient subsequently used for ATP formation. It consists of a core antenna complex that captures photons, and an electron transfer chain that converts photonic excitation into a charge separation. The polypeptide is Photosystem II reaction center protein J (Chara vulgaris (Common stonewort)).